A 94-amino-acid chain; its full sequence is Aspartyl/glutamyl-tRNA(Asn/Gln) amidotransferase subunit C (94 aa).

The protein belongs to the GatC family. Heterotrimer of A, B and C subunits.

The catalysed reaction is L-glutamyl-tRNA(Gln) + L-glutamine + ATP + H2O = L-glutaminyl-tRNA(Gln) + L-glutamate + ADP + phosphate + H(+). It carries out the reaction L-aspartyl-tRNA(Asn) + L-glutamine + ATP + H2O = L-asparaginyl-tRNA(Asn) + L-glutamate + ADP + phosphate + 2 H(+). Functionally, allows the formation of correctly charged Asn-tRNA(Asn) or Gln-tRNA(Gln) through the transamidation of misacylated Asp-tRNA(Asn) or Glu-tRNA(Gln) in organisms which lack either or both of asparaginyl-tRNA or glutaminyl-tRNA synthetases. The reaction takes place in the presence of glutamine and ATP through an activated phospho-Asp-tRNA(Asn) or phospho-Glu-tRNA(Gln). The chain is Aspartyl/glutamyl-tRNA(Asn/Gln) amidotransferase subunit C from Heliobacterium modesticaldum (strain ATCC 51547 / Ice1).